The following is a 307-amino-acid chain: Undecaprenyl-diphosphatase 2 (307 aa).

A run of 8 helical transmembrane segments spans residues 19–41 (GVTE…IIGF), 56–76 (IHMF…VLYW), 117–137 (FKFW…GLPF), 144–164 (LLFF…WMIF), 208–228 (IIGA…SFFL), 229–249 (AIPM…VVLS), 251–271 (VQIL…LVVV), and 285–305 (IFAV…FTKV).

This sequence belongs to the UppP family.

The protein resides in the cell membrane. The catalysed reaction is di-trans,octa-cis-undecaprenyl diphosphate + H2O = di-trans,octa-cis-undecaprenyl phosphate + phosphate + H(+). Its function is as follows. Catalyzes the dephosphorylation of undecaprenyl diphosphate (UPP). Confers resistance to bacitracin. The chain is Undecaprenyl-diphosphatase 2 from Clostridium acetobutylicum (strain ATCC 824 / DSM 792 / JCM 1419 / IAM 19013 / LMG 5710 / NBRC 13948 / NRRL B-527 / VKM B-1787 / 2291 / W).